Reading from the N-terminus, the 327-residue chain is DNA gyrase subunit A (327 aa).

Residues 1-327 enclose the Topo IIA-type catalytic domain; sequence RPDRSHAKSA…GMATNIPPHN (327 aa). Residue Y65 is the O-(5'-phospho-DNA)-tyrosine intermediate of the active site.

This sequence belongs to the type II topoisomerase GyrA/ParC subunit family. As to quaternary structure, heterotetramer, composed of two GyrA and two GyrB chains. In the heterotetramer, GyrA contains the active site tyrosine that forms a transient covalent intermediate with DNA, while GyrB binds cofactors and catalyzes ATP hydrolysis. This protein undergoes a protein self splicing that involves a post-translational excision of the intervening region (intein) followed by peptide ligation.

It localises to the cytoplasm. It catalyses the reaction ATP-dependent breakage, passage and rejoining of double-stranded DNA.. A type II topoisomerase that negatively supercoils closed circular double-stranded (ds) DNA in an ATP-dependent manner to modulate DNA topology and maintain chromosomes in an underwound state. Negative supercoiling favors strand separation, and DNA replication, transcription, recombination and repair, all of which involve strand separation. Also able to catalyze the interconversion of other topological isomers of dsDNA rings, including catenanes and knotted rings. Type II topoisomerases break and join 2 DNA strands simultaneously in an ATP-dependent manner. In Mycobacterium xenopi, this protein is DNA gyrase subunit A (gyrA).